The chain runs to 358 residues: Aminomethyltransferase (358 aa).

Belongs to the GcvT family. The glycine cleavage system is composed of four proteins: P, T, L and H.

The catalysed reaction is N(6)-[(R)-S(8)-aminomethyldihydrolipoyl]-L-lysyl-[protein] + (6S)-5,6,7,8-tetrahydrofolate = N(6)-[(R)-dihydrolipoyl]-L-lysyl-[protein] + (6R)-5,10-methylene-5,6,7,8-tetrahydrofolate + NH4(+). Functionally, the glycine cleavage system catalyzes the degradation of glycine. This is Aminomethyltransferase from Francisella tularensis subsp. holarctica (strain FTNF002-00 / FTA).